The primary structure comprises 47 residues: Large ribosomal subunit protein bL34 (47 aa).

Belongs to the bacterial ribosomal protein bL34 family.

The chain is Large ribosomal subunit protein bL34 from Mycobacterium sp. (strain JLS).